The sequence spans 188 residues: MAERGSDIRPGQILDHNGSLYLVVKTMHTQPGKGGAYIQAELKNLKTGAKYQERFRSDGYVKRAIVEEVEYQYIFGDGALLTLMNTATYEQVSISADMLGEKGVYLKEGIILTLSFYQGQVVAARVPDYVVLEVVETESVIKGQTASSSYKSAVLENGERISVPPFIKVGERIVVYTVDDTYYERAKD.

The protein belongs to the elongation factor P family.

The protein resides in the cytoplasm. The protein operates within protein biosynthesis; polypeptide chain elongation. In terms of biological role, involved in peptide bond synthesis. Stimulates efficient translation and peptide-bond synthesis on native or reconstituted 70S ribosomes in vitro. Probably functions indirectly by altering the affinity of the ribosome for aminoacyl-tRNA, thus increasing their reactivity as acceptors for peptidyl transferase. The chain is Elongation factor P from Anaplasma marginale (strain Florida).